The primary structure comprises 1580 residues: Dynamin-binding protein (1580 aa).

At methionine 1 the chain carries N-acetylmethionine. SH3 domains lie at 2-61, 66-127, and 146-205; these read EPGS…IVTI, EGER…ELCL, and YSLG…LLGP. Disordered stretches follow at residues 211-245, 304-446, 500-546, and 589-688; these read ESVNSRSGDDSAVNGEVDVPPEEAESGGDEDDQQS, NRTE…LVPL, YAQK…DSLD, and RGSS…AQTF. Over residues 229-243 the composition is skewed to acidic residues; sequence VPPEEAESGGDEDDQ. An SH3 4 domain is found at 244 to 303; it reads QSGTYGIALYRFQALETNELDFEVGDRIQILGTLEDGWLEGCLKGKTGVFPHRFVKLCPS. 2 stretches are compositionally biased toward polar residues: residues 422–439 and 502–513; these read QKSQHYLTAGGSHQTSDP and QKHQTSTENTAS. Positions 516 to 527 are enriched in basic and acidic residues; the sequence is DPPERPERRPGL. Positions 608-617 are enriched in pro residues; that stretch reads RPPPPRPRTP. Basic and acidic residues predominate over residues 671-682; that stretch reads APEKEDSEHMEK. At serine 683 the chain carries Phosphoserine. The stretch at 694–755 forms a coiled coil; sequence LARIRDVEQD…LELQQLRDMT (62 aa). A DH domain is found at 783–970; that stretch reads KRAKVVAELL…KEINVNINEY (188 aa). A BAR domain is found at 1011–1220; that stretch reads LKHLTGFAPQ…LKATDREGNL (210 aa). The region spanning 1288-1351 is the SH3 5 domain; the sequence is PPEKLFHVQR…YSSFLKPYNP (64 aa). The segment covering 1356-1365 has biased composition (low complexity); the sequence is SDASVASHSS. Disordered stretches follow at residues 1356–1384 and 1426–1514; these read SDASVASHSSTESEHSGSSPGCHRQNSHS and TGHP…GSSE. Positions 1426–1440 are enriched in polar residues; sequence TGHPETGPSTCSSDP. Residues 1516–1579 form the SH3 6 domain; it reads EGNQVYFAIY…PSNYIRKTEY (64 aa).

As to quaternary structure, binds DNM1 via its N-terminal SH3 domains. The C-terminal SH3 domain binds a complex containing actin, tubulin, Hsp70 and actin-regulatory proteins, such as ENAH, EVL, WIRE, CR16, WAVE1 and NAP1L1. Interacts with FASLG. Interacts (via SH3 domain 6) with WASL. Interacts (via SH3 domain 6) interacts with ENAH. Interacts (via C-terminal domain) with TJP1; required for the apical cell-cell junction localization of DNMBP.

It localises to the cytoplasm. The protein resides in the golgi apparatus. The protein localises to the golgi stack. Its subcellular location is the cytoskeleton. It is found in the synapse. It localises to the cell junction. In terms of biological role, plays a critical role as a guanine nucleotide exchange factor (GEF) for CDC42 in several intracellular processes associated with the actin and microtubule cytoskeleton. Regulates the structure of apical junctions in epithelial cells. Participates in the normal lumenogenesis of epithelial cell cysts by regulating spindle orientation. Plays a role in ciliogenesis. May play a role in membrane trafficking between the cell surface and the Golgi. This Mus musculus (Mouse) protein is Dynamin-binding protein.